We begin with the raw amino-acid sequence, 470 residues long: 24-hydroxycholesterol 7-alpha-hydroxylase (470 aa).

A run of 2 helical transmembrane segments spans residues 3–23 (IMEL…LFLF) and 270–290 (VVLW…LGYI). Cysteine 415 is a binding site for heme.

The protein belongs to the cytochrome P450 family. It depends on heme as a cofactor. As to expression, liver specific. Hepatic expression is sexually dimorphic (female &gt; male).

It localises to the endoplasmic reticulum membrane. Its subcellular location is the microsome membrane. The catalysed reaction is (24S)-hydroxycholesterol + reduced [NADPH--hemoprotein reductase] + O2 = (24S)-7alpha-dihydroxycholesterol + oxidized [NADPH--hemoprotein reductase] + H2O + H(+). It functions in the pathway steroid metabolism; cholesterol degradation. It participates in lipid metabolism; bile acid biosynthesis. A cytochrome P450 monooxygenase involved in neural cholesterol clearance through bile acid synthesis. Catalyzes 7-alpha hydroxylation of (24S)-hydroxycholesterol, a neural oxysterol that is metabolized to bile acids in the liver. Mechanistically, uses molecular oxygen inserting one oxygen atom into a substrate, and reducing the second into a water molecule, with two electrons provided by NADPH via cytochrome P450 reductase (CPR; NADPH-ferrihemoprotein reductase). This is 24-hydroxycholesterol 7-alpha-hydroxylase (Cyp39a1) from Mus musculus (Mouse).